The primary structure comprises 396 residues: 8-amino-7-oxononanoate synthase (396 aa).

Residue Arg21 participates in substrate binding. 108–109 is a pyridoxal 5'-phosphate binding site; that stretch reads GY. A substrate-binding site is contributed by His133. 3 residues coordinate pyridoxal 5'-phosphate: Ser179, His207, and Thr236. An N6-(pyridoxal phosphate)lysine modification is found at Lys239. Thr353 lines the substrate pocket.

It belongs to the class-II pyridoxal-phosphate-dependent aminotransferase family. BioF subfamily. As to quaternary structure, homodimer. Pyridoxal 5'-phosphate serves as cofactor.

The enzyme catalyses 6-carboxyhexanoyl-[ACP] + L-alanine + H(+) = (8S)-8-amino-7-oxononanoate + holo-[ACP] + CO2. Its pathway is cofactor biosynthesis; biotin biosynthesis. In terms of biological role, catalyzes the decarboxylative condensation of pimeloyl-[acyl-carrier protein] and L-alanine to produce 8-amino-7-oxononanoate (AON), [acyl-carrier protein], and carbon dioxide. This is 8-amino-7-oxononanoate synthase from Hahella chejuensis (strain KCTC 2396).